Reading from the N-terminus, the 866-residue chain is MAYYMDTWAAAPAERPGMIASLSLSFKKAFAELFPQRRRGHSEGDYPPLRGSANNSLEEHYRWQIPIKHNVFEILKSNESQLCEVLQNKFGCISTLSCPTLAGSSSPAQRVFRRTLIPGIELSVWKDDLTRHVVDAVVNAANENLLHGSGLAGSLVKTGGFEIQEESKRIIANVGKISVGGIAITGAGRLPCHLIIHAVGPRWTVTNSQTAIELLKFAIRNILDYVTKYDLRIKTVAIPALSSGIFQFPLDLCTSIILETIRLYFQDKQMFGNLREIHLVSNEDPTVASFKSASESILGRDLSSWGGPETDPASTMTLRIGRGLTLQIVQGCIEMQTTDVIVNSGYMQDFKSGRVAQSILRQAGVEMEKELDKVNLSTDYQEVWVTKGFKLSCQYVFHVAWHSQINKYQILKDAMKSCLEKCLKPDINSISFPALGTGLMDLKKSTAAQIMFEEVFAFAKEHKEKTLTVKIVIFPVDVETYKIFYAEMTKRSNELNLSGNSGALALQWSSGEQRRGGLEAGSPAINLMGVKVGEMCEAQEWIERLLVSLDHHIIENNHILYLGKKEHDVLSELQTSTRVSISETVSPRTATLEIKGPQADLIDAVMRIECMLCDVQEEVAGKREKNLWSLSGQGTNQQEKLDKMEESYTFQRYPASLTQELQDRKKQFEKCGLWVVQVEQIDNKVLLAAFQEKKKMMEERTPKGSGSQRLFQQVPHQFCNTVCRVGFHRMYSTSYNPVYGAGIYFTKSLKNLADKVKKTSSTDKLIYVFEAEVLTGSFCQGNSSNIIPPPLSPGALDVNDSVVDNVSSPETIVVFNGMQAMPLYLWTCTQDRTFSQHPMWSQGYSSGPGMVSSLQSWEWVLNGSSV.

Ser42 carries the phosphoserine modification. Macro domains lie at 109-298 (QRVF…ESIL) and 313-492 (ASTM…TKRS). One can recognise a PARP catalytic domain in the interval 635–853 (TNQQEKLDKM…YSSGPGMVSS (219 aa)).

The protein belongs to the ARTD/PARP family. As to quaternary structure, forms a stable complex with E3 ligase DTX3L; the interaction is required for PARP9 mediated ADP-ribosylation of ubiquitin. Interacts (via PARP catalytic domain) with DTX3L (via N-terminus). Forms a complex with STAT1 and DTX3L independently of IFNB1 or IFNG-mediated STAT1 'Tyr-701' phosphorylation. Forms a complex with STAT1, DTX3L and histone H2B H2BC9/H2BJ; the interaction is likely to induce H2BC9/H2BJ ubiquitination. Interacts (via N-terminus) with STAT1. Interacts with PARP14 in IFNG-stimulated macrophages; the interaction prevents PARP14-mediated STAT1 and STAT6 ADP-riboslylation. Interacts with PARP1 (when poly-ADP-ribosylated). Post-translationally, ADP-ribosylated by PARP14. In terms of tissue distribution, highly expressed in the thymus and intestine. Expressed in macrophages.

The protein resides in the cytoplasm. Its subcellular location is the cytosol. It localises to the nucleus. The catalysed reaction is [protein]-C-terminal glycine + NAD(+) = [protein]-C-terminal O-(ADP-D-ribosyl)-glycine + nicotinamide. Binding to poly(ADP-ribose) does not affect its activity. In terms of biological role, ADP-ribosyltransferase which, in association with E3 ligase DTX3L, plays a role in DNA damage repair and in immune responses including interferon-mediated antiviral defenses. Within the complex, enhances DTX3L E3 ligase activity which is further enhanced by PARP9 binding to poly(ADP-ribose). In addition, positively regulates DTXL3 protein levels. In association with DTX3L and in presence of E1 and E2 enzymes, mediates NAD(+)-dependent mono-ADP-ribosylation of ubiquitin which prevents ubiquitin conjugation to substrates such as histones. During DNA repair, PARP1 recruits PARP9/BAL1-DTX3L complex to DNA damage sites via PARP9 binding to ribosylated PARP1. Subsequent PARP1-dependent PARP9/BAL1-DTX3L-mediated ubiquitination promotes the rapid and specific recruitment of 53BP1/TP53BP1, UIMC1/RAP80, and BRCA1 to DNA damage sites. In response to DNA damage, PARP9-DTX3L complex is required for efficient non-homologous end joining (NHEJ) but the complex function is restrained by PARP9 activity. Dispensable for B-cell receptor (BCR) assembly through V(D)J recombination and class switch recombination (CSR). In macrophages, positively regulates pro-inflammatory cytokines production in response to IFNG stimulation by suppressing PARP14-mediated STAT1 ADP-ribosylation and thus promoting STAT1 phosphorylation. Also suppresses PARP14-mediated STAT6 ADP-ribosylation. The sequence is that of Protein mono-ADP-ribosyltransferase PARP9 (Parp9) from Mus musculus (Mouse).